The following is a 163-amino-acid chain: ATP synthase subunit delta, chloroplastic (163 aa).

The protein belongs to the ATPase delta chain family. In terms of assembly, F-type ATPases have 2 components, F(1) - the catalytic core - and F(0) - the membrane proton channel. F(1) has five subunits: alpha(3), beta(3), gamma(1), delta(1), epsilon(1). CF(0) has four main subunits: a(1), b(1), b'(1) and c(10-14). The alpha and beta chains form an alternating ring which encloses part of the gamma chain. F(1) is attached to F(0) by a central stalk formed by the gamma and epsilon chains, while a peripheral stalk is formed by the delta, b and b' chains.

It is found in the plastid. The protein localises to the chloroplast thylakoid membrane. Its function is as follows. F(1)F(0) ATP synthase produces ATP from ADP in the presence of a proton or sodium gradient. F-type ATPases consist of two structural domains, F(1) containing the extramembraneous catalytic core and F(0) containing the membrane proton channel, linked together by a central stalk and a peripheral stalk. During catalysis, ATP synthesis in the catalytic domain of F(1) is coupled via a rotary mechanism of the central stalk subunits to proton translocation. In terms of biological role, this protein is part of the stalk that links CF(0) to CF(1). It either transmits conformational changes from CF(0) to CF(1) or is implicated in proton conduction. In Cyanidioschyzon merolae (strain NIES-3377 / 10D) (Unicellular red alga), this protein is ATP synthase subunit delta, chloroplastic.